A 57-amino-acid chain; its full sequence is Preprotein translocase subunit SecG (57 aa).

The Cytoplasmic portion of the chain corresponds to 1–33; it reads MARRRKYEGLNPFVAAGLIKFSEEGELERIKLN. Residues 34-55 traverse the membrane as a helical segment; it reads PRTAILVSITVIIAILVLNILH. Over 56–57 the chain is Extracellular; sequence PL.

This sequence belongs to the SEC61-beta family. As to quaternary structure, component of the protein translocase complex. Heterotrimer consisting of alpha (SecY), beta (SecG) and gamma (SecE) subunits. Can form oligomers of the heterotrimer.

The protein resides in the cell membrane. In terms of biological role, involved in protein export. The function of the beta subunit is unknown, but it may be involved in stabilization of the trimeric complex. The polypeptide is Preprotein translocase subunit SecG (Pyrobaculum islandicum (strain DSM 4184 / JCM 9189 / GEO3)).